The sequence spans 115 residues: Large ribosomal subunit protein bL20 (115 aa).

The protein belongs to the bacterial ribosomal protein bL20 family.

Its function is as follows. Binds directly to 23S ribosomal RNA and is necessary for the in vitro assembly process of the 50S ribosomal subunit. It is not involved in the protein synthesizing functions of that subunit. The polypeptide is Large ribosomal subunit protein bL20 (Chlorobium chlorochromatii (strain CaD3)).